A 656-amino-acid polypeptide reads, in one-letter code: Translation factor GUF1 homolog, mitochondrial (656 aa).

The transit peptide at 1-29 directs the protein to the mitochondrion; sequence MLAVRRRGLRVLAVAPLRVRGLATTSTEF. Residues 54-238 enclose the tr-type G domain; the sequence is ERIRNFSIVA…AVVERLPPPV (185 aa). GTP is bound by residues 63-70, 131-135, and 185-188; these read AHIDHGKS, DTPGH, and TKID.

The protein belongs to the TRAFAC class translation factor GTPase superfamily. Classic translation factor GTPase family. LepA subfamily.

The protein localises to the mitochondrion inner membrane. The catalysed reaction is GTP + H2O = GDP + phosphate + H(+). Functionally, promotes mitochondrial protein synthesis. May act as a fidelity factor of the translation reaction, by catalyzing a one-codon backward translocation of tRNAs on improperly translocated ribosomes. Binds to mitochondrial ribosomes in a GTP-dependent manner. The sequence is that of Translation factor GUF1 homolog, mitochondrial from Phytophthora infestans (strain T30-4) (Potato late blight agent).